Reading from the N-terminus, the 297-residue chain is Light-independent protochlorophyllide reductase iron-sulfur ATP-binding protein (297 aa).

ATP is bound by residues 41-46 (GIGKST) and lysine 70. Mg(2+) is bound at residue serine 45. 2 residues coordinate [4Fe-4S] cluster: cysteine 126 and cysteine 160. ATP contacts are provided by residues 211–212 (NR) and 235–237 (PDL).

The protein belongs to the NifH/BchL/ChlL family. As to quaternary structure, homodimer. Protochlorophyllide reductase is composed of three subunits; BchL, BchN and BchB. [4Fe-4S] cluster is required as a cofactor.

It catalyses the reaction chlorophyllide a + oxidized 2[4Fe-4S]-[ferredoxin] + 2 ADP + 2 phosphate = protochlorophyllide a + reduced 2[4Fe-4S]-[ferredoxin] + 2 ATP + 2 H2O. The protein operates within porphyrin-containing compound metabolism; bacteriochlorophyll biosynthesis (light-independent). Component of the dark-operative protochlorophyllide reductase (DPOR) that uses Mg-ATP and reduced ferredoxin to reduce ring D of protochlorophyllide (Pchlide) to form chlorophyllide a (Chlide). This reaction is light-independent. The L component serves as a unique electron donor to the NB-component of the complex, and binds Mg-ATP. This Methylorubrum extorquens (strain CM4 / NCIMB 13688) (Methylobacterium extorquens) protein is Light-independent protochlorophyllide reductase iron-sulfur ATP-binding protein.